The following is a 1077-amino-acid chain: Disheveled-associated activator of morphogenesis 1 (1077 aa).

At S34 the chain carries Phosphoserine. The 376-residue stretch at 45–420 (LPMPPVEELD…QIVIQNDKGQ (376 aa)) folds into the GBD/FH3 domain. The stretch at 437–526 (RMLVNENEVK…ELNRRAVCAA (90 aa)) forms a coiled coil. 2 disordered regions span residues 457 to 478 (KEHNELQQKLEKKERECDAKTQ) and 526 to 596 (AVPG…PVSL). One can recognise an FH1 domain in the interval 528-599 (PGGPSPGAPG…PGAPVSLTLK (72 aa)). 2 stretches are compositionally biased toward pro residues: residues 530–539 (GPSPGAPGGP) and 549–592 (LPPP…PPGA). The region spanning 600–1008 (KKNIPQPTNA…EERRARLEAQ (409 aa)) is the FH2 domain. Residues 693 to 702 (QNCNILLSRL) form an actin-binding region. Basic and acidic residues predominate over residues 1007–1026 (AQLKEQRERERKVRKAKESS). 2 disordered regions span residues 1007-1033 (AQLKEQRERERKVRKAKESSEESGEFD) and 1056-1077 (RKRISNQVTDSSRERPITKLNF). A phosphoserine mark is found at S1026 and S1029. Residues 1026–1057 (SEESGEFDDLVSALRSGEVFDKDLSKLKRNRK) enclose the DAD domain. Residues 1066–1077 (SSRERPITKLNF) show a composition bias toward basic and acidic residues.

Belongs to the formin homology family. In terms of assembly, interacts with CIP4, FNBP1 and FNBP1L. Interacts with the SH3 domains of Abl, BTK, endophilin, spectrin and SRC. Binds specifically to GTP-bound CDC42 and RHOA. Interacts with INTU; INTU mediates the indirect interaction between DAAM1 and NPHP4. Interacts (via coiled coil domain) with KANK1 (via coiled coil domain). As to expression, in early embryogenesis, expressed in embryonic and extraembryonic ectoderm. In later stages of gastrulation, expressed also in somites and ribs and posterior vertebrae of developing skeletal system. During organogenesis, expressed in CNS, PNS, stomach, liver and limb bud.

The protein resides in the cytoplasm. It localises to the cytoskeleton. It is found in the cilium basal body. Functionally, binds to disheveled (Dvl) and Rho, and mediates Wnt-induced Dvl-Rho complex formation. May play a role as a scaffolding protein to recruit Rho-GDP and Rho-GEF, thereby enhancing Rho-GTP formation. Can direct nucleation and elongation of new actin filaments. Involved in building functional cilia. Involved in the organization of the subapical actin network in multiciliated epithelial cells. Together with DAAM2, required for myocardial maturation and sarcomere assembly. During cell division, may regulate RHOA activation that signals spindle orientation and chromosomal segregation. The polypeptide is Disheveled-associated activator of morphogenesis 1 (Daam1) (Mus musculus (Mouse)).